The sequence spans 273 residues: 3-methyl-2-oxobutanoate hydroxymethyltransferase (273 aa).

Mg(2+) is bound by residues aspartate 53 and aspartate 92. Residues 53-54, aspartate 92, and lysine 120 each bind 3-methyl-2-oxobutanoate; that span reads DS. A Mg(2+)-binding site is contributed by glutamate 122. Glutamate 189 serves as the catalytic Proton acceptor.

The protein belongs to the PanB family. In terms of assembly, homodecamer; pentamer of dimers. Mg(2+) is required as a cofactor.

It is found in the cytoplasm. The enzyme catalyses 3-methyl-2-oxobutanoate + (6R)-5,10-methylene-5,6,7,8-tetrahydrofolate + H2O = 2-dehydropantoate + (6S)-5,6,7,8-tetrahydrofolate. It functions in the pathway cofactor biosynthesis; (R)-pantothenate biosynthesis; (R)-pantoate from 3-methyl-2-oxobutanoate: step 1/2. In terms of biological role, catalyzes the reversible reaction in which hydroxymethyl group from 5,10-methylenetetrahydrofolate is transferred onto alpha-ketoisovalerate to form ketopantoate. This chain is 3-methyl-2-oxobutanoate hydroxymethyltransferase, found in Cupriavidus pinatubonensis (strain JMP 134 / LMG 1197) (Cupriavidus necator (strain JMP 134)).